Here is a 974-residue protein sequence, read N- to C-terminus: Probable proton ATPase 1B (974 aa).

A compositionally biased stretch (basic and acidic residues) spans 1-23 (MSSKKYELDAAAFEDKPESHSDA). Residues 1-61 (MSSKKYELDA…ATDLLPPSKG (61 aa)) form a disordered region. The next 4 helical transmembrane spans lie at 93 to 112 (GLWGPMPAALWIAIIIEFAL), 118 to 137 (GAILFAIQIANATIGWYETI), 265 to 286 (VMLALCAISFILCMCCFIYLLA), and 295 to 321 (ALQFAVVVLVVSIPIALEIVVTTTLAV). D351 (4-aspartylphosphate intermediate) is an active-site residue. 6 helical membrane-spanning segments follow: residues 631–651 (AAADMVLTEPGLSVVVEAMLV), 662–684 (FLTYRISATLQLVCFFFIACFSL), 698–712 (FFHLPVLMFMLITLL), 738–761 (VVFVSASILAAVACGSSLMLLWIG), 813–840 (FFFYVPPSPILFCGAIISLLVSTMAASF), and 869–887 (VWIYCIVWWFVQDVVKVLA). The disordered stretch occupies residues 952-974 (REDTHVLNESTSPVNAFSPKVKK).

Belongs to the cation transport ATPase (P-type) (TC 3.A.3) family. Type IIIA subfamily.

The protein resides in the membrane. It catalyses the reaction ATP + H2O + H(+)(in) = ADP + phosphate + 2 H(+)(out). The chain is Probable proton ATPase 1B (H1B) from Leishmania donovani.